The following is a 237-amino-acid chain: Urease accessory protein UreF (237 aa).

The protein belongs to the UreF family. In terms of assembly, ureD, UreF and UreG form a complex that acts as a GTP-hydrolysis-dependent molecular chaperone, activating the urease apoprotein by helping to assemble the nickel containing metallocenter of UreC. The UreE protein probably delivers the nickel.

It localises to the cytoplasm. In terms of biological role, required for maturation of urease via the functional incorporation of the urease nickel metallocenter. The protein is Urease accessory protein UreF of Methylibium petroleiphilum (strain ATCC BAA-1232 / LMG 22953 / PM1).